Consider the following 148-residue polypeptide: MKAVIILGLVLLSVTVQGKIFERCELARTLKRLGLDGYRGISLANWVCLAKWESDYNTQATNYNPGDQSTDYGIFQINSHYWCNNGKTPGAVNACRISCNALLQDNIADAVTCAKRVVRDPQGIRAWVAWRNHCQNRDVSQYVQGCGV.

Residues 1 to 18 form the signal peptide; that stretch reads MKAVIILGLVLLSVTVQG. The 130-residue stretch at 19-148 folds into the C-type lysozyme domain; it reads KIFERCELAR…VSQYVQGCGV (130 aa). 4 cysteine pairs are disulfide-bonded: Cys-24-Cys-146, Cys-48-Cys-134, Cys-83-Cys-99, and Cys-95-Cys-113. Active-site residues include Glu-53 and Asp-71.

It belongs to the glycosyl hydrolase 22 family. In terms of assembly, monomer.

The catalysed reaction is Hydrolysis of (1-&gt;4)-beta-linkages between N-acetylmuramic acid and N-acetyl-D-glucosamine residues in a peptidoglycan and between N-acetyl-D-glucosamine residues in chitodextrins.. Its function is as follows. Lysozymes have primarily a bacteriolytic function; those in tissues and body fluids are associated with the monocyte-macrophage system and enhance the activity of immunoagents. In Allenopithecus nigroviridis (Allen's swamp monkey), this protein is Lysozyme C (LYZ).